Reading from the N-terminus, the 820-residue chain is Serine/threonine-protein phosphatase 4 regulatory subunit 3-A (820 aa).

Residues 1 to 100 (MSDTRRRVKV…DEIWEKICQV (100 aa)) enclose the WH1 domain. A compositionally biased stretch (acidic residues) spans 682 to 694 (ELWFNEDDEEEGE). Disordered regions lie at residues 682–712 (ELWF…FPEG) and 750–820 (AANG…RLGS). Over residues 701 to 712 (EKTKPEDDFPEG) the composition is skewed to basic and acidic residues. Composition is skewed to polar residues over residues 750-761 (AANGANSTNSKS) and 768-790 (PATS…STKG). Over residues 798-809 (YPDDEDEEEEED) the composition is skewed to acidic residues.

Belongs to the SMEK family. In terms of assembly, serine/threonine-protein phosphatase 4 (PP4) occurs in different assemblies of the catalytic and one or more regulatory subunits.

Its function is as follows. Regulatory subunit of serine/threonine-protein phosphatase 4 (PP4). The polypeptide is Serine/threonine-protein phosphatase 4 regulatory subunit 3-A (Xenopus laevis (African clawed frog)).